Reading from the N-terminus, the 114-residue chain is Histone H2A.Z-specific chaperone chz-1 (114 aa).

The segment covering 1–22 has biased composition (polar residues); that stretch reads MSTENGTTDTTLAGTAEANTPF. Residues 1–114 are disordered; it reads MSTENGTTDT…FVPEDEEMEE (114 aa). The segment covering 24–40 has biased composition (basic and acidic residues); that stretch reads SKGKGKAAAESEDHPMG. 2 stretches are compositionally biased toward acidic residues: residues 41-68 and 93-114; these read EAEDDEDDEDEDETEEPEAEEDNLEEID and PAEEDDEEDDEEFVPEDEEMEE.

Belongs to the CHZ1 family. Forms a heterotrimer with H2A.Z-H2B, stabilizing the association of the histone dimer. Also, with a lower affinity, forms a heterotrimer with H2A-H2B.

Its subcellular location is the nucleus. Forms a chaperone-bound H2A.Z-H2B complex that acts as a source for SWR1 complex-dependent H2A to H2A.Z histone replacement in chromatin. This is Histone H2A.Z-specific chaperone chz-1 (chz-1) from Neurospora crassa (strain ATCC 24698 / 74-OR23-1A / CBS 708.71 / DSM 1257 / FGSC 987).